Reading from the N-terminus, the 240-residue chain is Regulatory protein HlyX (240 aa).

The essential for the oxygen-regulated activity stretch occupies residues 15–28 (CTIHCQNCSISQLC). One can recognise an HTH crp-type domain in the interval 163–236 (MSAEEKLAAF…GKYITINRMD (74 aa)). A DNA-binding region (H-T-H motif) is located at residues 196–215 (RGDIGNYLGLTIETISRLLG).

It localises to the cytoplasm. Its function is as follows. Confers a hemolytic phenotype on E.coli. May regulate, rather than mediate, hemolytic activity. The sequence is that of Regulatory protein HlyX (hlyX) from Actinobacillus pleuropneumoniae (Haemophilus pleuropneumoniae).